The sequence spans 557 residues: Potassium-transporting ATPase potassium-binding subunit (557 aa).

The next 12 membrane-spanning stretches (helical) occupy residues 5–25, 63–83, 132–152, 170–190, 253–273, 283–303, 329–349, 356–376, 379–399, 416–436, 484–504, and 526–546; these read GFLL…PLGS, LSAI…MLLG, GLTV…FALI, LLRI…LFFI, FVQM…FGEV, LLWA…WAEV, VLVS…AVIA, ALGG…FGGV, GLYG…LMIG, LTAL…ALAM, LLAF…MAIA, and LFVG…FIPA.

It belongs to the KdpA family. In terms of assembly, the system is composed of three essential subunits: KdpA, KdpB and KdpC.

It localises to the cell inner membrane. Functionally, part of the high-affinity ATP-driven potassium transport (or Kdp) system, which catalyzes the hydrolysis of ATP coupled with the electrogenic transport of potassium into the cytoplasm. This subunit binds the periplasmic potassium ions and delivers the ions to the membrane domain of KdpB through an intramembrane tunnel. The polypeptide is Potassium-transporting ATPase potassium-binding subunit (Escherichia fergusonii (strain ATCC 35469 / DSM 13698 / CCUG 18766 / IAM 14443 / JCM 21226 / LMG 7866 / NBRC 102419 / NCTC 12128 / CDC 0568-73)).